We begin with the raw amino-acid sequence, 416 residues long: Queuine tRNA-ribosyltransferase accessory subunit 2 (416 aa).

Positions 350, 352, 355, and 381 each coordinate Zn(2+).

Belongs to the queuine tRNA-ribosyltransferase family. QTRT2 subfamily. Heterodimer of a catalytic subunit qtrt1 and an accessory subunit qtrt2. Zn(2+) is required as a cofactor.

It localises to the cytoplasm. The protein localises to the mitochondrion outer membrane. Functionally, non-catalytic subunit of the queuine tRNA-ribosyltransferase (TGT) that catalyzes the base-exchange of a guanine (G) residue with queuine (Q) at position 34 (anticodon wobble position) in tRNAs with GU(N) anticodons (tRNA-Asp, -Asn, -His and -Tyr), resulting in the hypermodified nucleoside queuosine (7-(((4,5-cis-dihydroxy-2-cyclopenten-1-yl)amino)methyl)-7-deazaguanosine). This chain is Queuine tRNA-ribosyltransferase accessory subunit 2, found in Danio rerio (Zebrafish).